The chain runs to 699 residues: Catalase-peroxidase (699 aa).

The segment at residues Trp72–Tyr200 is a cross-link (tryptophyl-tyrosyl-methioninium (Trp-Tyr) (with M-226)). His73 acts as the Proton acceptor in catalysis. The segment at residues Tyr200–Met226 is a cross-link (tryptophyl-tyrosyl-methioninium (Tyr-Met) (with W-72)). Residue His241 coordinates heme b.

Belongs to the peroxidase family. Peroxidase/catalase subfamily. Homodimer or homotetramer. Heme b serves as cofactor. Formation of the three residue Trp-Tyr-Met cross-link is important for the catalase, but not the peroxidase activity of the enzyme.

It carries out the reaction H2O2 + AH2 = A + 2 H2O. It catalyses the reaction 2 H2O2 = O2 + 2 H2O. Its function is as follows. Bifunctional enzyme with both catalase and broad-spectrum peroxidase activity. This chain is Catalase-peroxidase, found in Aeromonas salmonicida (strain A449).